Consider the following 500-residue polypeptide: FAD-linked oxidoreductase easE (500 aa).

The 184-residue stretch at 37-220 (QGRIPLFTVG…TRATMRVFPD (184 aa)) folds into the FAD-binding PCMH-type domain.

It belongs to the oxygen-dependent FAD-linked oxidoreductase family. FAD serves as cofactor.

Its pathway is alkaloid biosynthesis; ergot alkaloid biosynthesis. FAD-linked oxidoreductase; part of the gene cluster that mediates the biosynthesis of fungal ergot alkaloid. DmaW catalyzes the first step of ergot alkaloid biosynthesis by condensing dimethylallyl diphosphate (DMAP) and tryptophan to form 4-dimethylallyl-L-tryptophan. The second step is catalyzed by the methyltransferase easF that methylates 4-dimethylallyl-L-tryptophan in the presence of S-adenosyl-L-methionine, resulting in the formation of 4-dimethylallyl-L-abrine. The catalase easC and the FAD-dependent oxidoreductase easE then transform 4-dimethylallyl-L-abrine to chanoclavine-I which is further oxidized by easD in the presence of NAD(+), resulting in the formation of chanoclavine-I aldehyde. Chanoclavine-I aldehyde is the precursor of ergoamides and ergopeptines in Clavicipitaceae, and clavine-type alcaloids such as fumiclavine in Trichocomaceae. However, the metabolites downstream of chanoclavine-I aldehyde in Arthrodermataceae have not been identified yet. The protein is FAD-linked oxidoreductase easE of Arthroderma benhamiae (strain ATCC MYA-4681 / CBS 112371) (Trichophyton mentagrophytes).